Consider the following 599-residue polypeptide: Afamin (599 aa).

The signal sequence occupies residues 1–21; that stretch reads MKLLKLTGFIFFLFFLTESLT. Albumin domains lie at 22–210, 211–403, and 404–599; these read LPTQ…IPVT, QYLK…KFNE, and TTEK…KIGN. A glycan (N-linked (GlcNAc...) (complex) asparagine) is linked at N33. Disulfide bonds link C77/C86, C99/C114, C113/C124, C148/C193, C192/C201, C224/C270, C269/C277, C289/C303, C302/C313, C340/C385, and C384/C393. N-linked (GlcNAc...) (complex) asparagine glycosylation occurs at N109. Positions 215 to 319 are binding pocket for hydrophobic ligands; that stretch reads AFSSYQKHVC…RGQCIINSNK (105 aa). N383 carries an N-linked (GlcNAc...) (complex) asparagine; atypical glycan. N-linked (GlcNAc...) (complex) asparagine glycosylation is present at N402. Disulfide bonds link C416/C462, C461/C470, C483/C499, C498/C509, C536/C581, and C580/C589. A glycan (N-linked (GlcNAc...) asparagine) is linked at N488.

It belongs to the ALB/AFP/VDB family. Forms a 1:1 complex with Wnt family members; interacts with WNT1, WNT2B, WNT3, WNT3A, WNT5A, WNT7A, WNT7B, WNT8, WNT9A, WNT9B, WNT10A and WNT10B. N-glycosylated; more than 90% of the glycans are sialylated. In terms of tissue distribution, high level detected in plasma but also in extravascular fluids such as follicular and cerebrospinal fluids (at protein level).

The protein resides in the secreted. Functions as a carrier for hydrophobic molecules in body fluids. Essential for the solubility and activity of lipidated Wnt family members, including WNT1, WNT2B, WNT3, WNT3A, WNT5A, WNT7A, WNT7B, WNT8, WNT9A, WNT9B, WNT10A and WNT10B. Binds vitamin E. May transport vitamin E in body fluids under conditions where the lipoprotein system is not sufficient. May be involved in the transport of vitamin E across the blood-brain barrier. The protein is Afamin (AFM) of Homo sapiens (Human).